Consider the following 424-residue polypeptide: Tyrosine--tRNA ligase (424 aa).

Y37 is a binding site for L-tyrosine. Positions 42–51 (PTADSLHLGH) match the 'HIGH' region motif. The L-tyrosine site is built by Y175 and Q179. The 'KMSKS' region motif lies at 235–239 (KFGKT). K238 is a binding site for ATP. The S4 RNA-binding domain maps to 357-414 (ADLQQALVNAELVPSRGQARTMIGSNAVAINGEKQADPEYVFTDADRLFGRYTLLRRG).

The protein belongs to the class-I aminoacyl-tRNA synthetase family. TyrS type 1 subfamily. In terms of assembly, homodimer.

It is found in the cytoplasm. The enzyme catalyses tRNA(Tyr) + L-tyrosine + ATP = L-tyrosyl-tRNA(Tyr) + AMP + diphosphate + H(+). In terms of biological role, catalyzes the attachment of tyrosine to tRNA(Tyr) in a two-step reaction: tyrosine is first activated by ATP to form Tyr-AMP and then transferred to the acceptor end of tRNA(Tyr). In Yersinia pestis bv. Antiqua (strain Antiqua), this protein is Tyrosine--tRNA ligase.